The sequence spans 150 residues: Large-conductance mechanosensitive channel (150 aa).

The next 2 membrane-spanning stretches (helical) occupy residues 14 to 34 (VIDL…VTSL) and 81 to 101 (GLFI…FIVI).

This sequence belongs to the MscL family. As to quaternary structure, homopentamer.

The protein localises to the cell membrane. Channel that opens in response to stretch forces in the membrane lipid bilayer. May participate in the regulation of osmotic pressure changes within the cell. The sequence is that of Large-conductance mechanosensitive channel from Desulfitobacterium hafniense (strain DSM 10664 / DCB-2).